The chain runs to 516 residues: RNA-binding region-containing protein 3 (516 aa).

Disordered regions lie at residues 1–27 (MAAP…RGDR), 106–130 (VHSP…DDKE), 210–254 (EDYM…DEDR), and 264–283 (ANLQ…RKKR). Position 21 is a phosphoserine (serine 21). The RRM 1 domain maps to 27-102 (RTLLVRHLPA…HTLVVEFAKE (76 aa)). The residue at position 108 (serine 108) is a Phosphoserine. The span at 115–130 (TEKKKRSDDPVEDDKE) shows a compositional bias: basic and acidic residues. Pro residues predominate over residues 217–230 (APLPPTSPQPPEEP). Over residues 269–283 (KRPKPIKQRHVRKKR) the composition is skewed to basic residues. Residues 419-502 (CRIYVKNLAK…KPMVVQFARS (84 aa)) enclose the RRM 2 domain.

In terms of assembly, component of the U11/U12 snRNPs that are part of the U12-type spliceosome. Found in a complex with m(7)G-capped U12 snRNA. Interacts with PDCD7.

The protein localises to the nucleus. In terms of biological role, participates in pre-mRNA U12-dependent splicing, performed by the minor spliceosome which removes U12-type introns. U12-type introns comprises less than 1% of all non-coding sequences. Binds to the 3'-stem-loop of m(7)G-capped U12 snRNA. The protein is RNA-binding region-containing protein 3 (RNPC3) of Bos taurus (Bovine).